Consider the following 1880-residue polypeptide: MGQASSHSENDLFISHLKESLKVRRIRVRKKDLVSFFSFIFKTCPWFPQEGSIDSRVWGRVGDCLNDYYRVFGPETIPITTFNYYNLIRDVLTNQSDSPDIQRLCKEGHKILISHSRPPSRQAPVTITTSEKASSRPPSRAPSTCPSVAIDIGSHDTGQSSLYPNLATLTDPPIQSPHSRAHTPPQHLPLLANSKTLHNSGSQDDQLNPADQADLEEAAAQYNNPDWPQLTNTPALPPFRPPSYVSTAVPPVAVAAPVLHAPTSGVPGSPTAPNLPGVALAKPSGPIDETVSLLDGVKTLVTKLSDLALLPPAGVMAFPVTRSQGQVSSNTTGRASPHPDTHTIPEEEEADSGESDSEDDEEESSEPTEPTYTHSYKRLNLKTIEKIKTAVANYGPTAPFTVALVESLSERWLTPSDWFFLSRAALSGGDNILWKSEYEDISKQFAERTRVRPPPKDGPLKIPGASPYQNNDKQAQFPPGLLTQIQSAGLKAWKRLPQKGAATTSLAKIRQGPDESYSDFVSRLQETADRLFGSGESESSFVKHLAYENANPACQSAIRPFRQKELSTMSPLLWYCSAHAVGLAIGAALQNLAPAQLLEPRPAFAIIVTNPAIFQETAPKKIQPPTQLPTQPNAPQASLIKNLGPTTKCPRCKKGFHWASECRSRLDINGQPIIKQGNLEQGPAPGPHYRDELRGFTVHPPIPPANPCPPSNQPRRYVTDLWRATAGSAGLDLCTTTDTILTTQNSPLTLPVGIYGPLPPQTFGLILAEPALPSKGIQVLPGILDNDFEGEIHIILSTTKDLVTIPKGTRLAQIVILPLQQINSNFHKPYRGASAPGSSDVYWVQQISQQRPTLKLKLNGKLFSGILDTGADATVISYTHWPRNWPLTTVATHLRGIGQATNPQQSAQMLKWEDSEGNNGHITPYVLPNLPVNLWGRDILSQMKLVMCSPNDTVMTQMLSQGYLPGQGLGKNNQGITQPITITPKKDKTGLGFHQNLPRSRAIDIPVPHADKISWKITDPVWVDQWPLTYEKTLAAIALVQEQLAAGHIEPTNSPWNTPIFIIKKKSGSWRLLQDLRAVNKVMVPMGALQPGLPSPVAIPLNYHKIVIDLKDCFFTIPLHPEDRPYFAFSVPQINFQSPMPRYQWKVLPQGMANSPTLCQKFVAAAIAPVRSQWPEAYILHYMDDILLACDSAEAAKACYAHIISCLTSYGLKIAPDKVQVSEPFSYLGFELHHQQVFTPRVCLKTDHLKTLNDFQKLLGDIQWLRPYLKLPTSALVPLNNILKGDPNPLSVRALTPEAKQSLALINKAIQNQSVQQISYNLPLVLLLLPTPHTPTAVFWQPNGTDPTKNGSPLLWLHLPASPSKVLLTYPSLLAMLIIKGRYTGRQLFGRDPHSIIIPYTQDQLTWLLQTSDEWAIALSSFTGDIDNHYPSDPVIQFAKLHQFIFPKITKCAPIPQATLVFTDGSSNGIAAYVIDNQPISIKSPYLSAQLVELYAILQVFTVLAHQPFNLYTDSAYIAQSVPLLETVPFIKSSTNATPLFSKLQQLILNRQHPFFIGHLRAHLNLPGPLAEGNALADAATQIFPIISDPIHEATQAHTLHHLNAHTLRLLYKITREQARDIVKACKQCVVATPVPHLGVNPRGLVPNAIWQMDVTHFTPFGKQRFVHVTVDTFSGFILATPQTGEASKNVISHVIHCLATIGKPHTIKTDNGPGYTGKNFQDFCQKLQIKHVTGIPYNPQGQGVVERAHQTLKNALNRLARSPLGFSMQQPRNLLSHALFQLNFLQLDSQGRSAADRLWHPQTSQQHATVMWRDPLTSVWKGPDPVLIWGRGSACIYDQKEDGPRWLPERLIRHINNQTAPLCDRPSNPNTAPGPKGSP.

A lipid anchor (N-myristoyl glycine; by host) is attached at Gly-2. Disordered regions lie at residues His-115–Asn-208, Ser-323–Tyr-376, and Ala-446–Gln-469. Polar residues-rich tracts occupy residues Arg-117–Lys-132, Asn-193–Gln-206, and Ser-323–Arg-334. Acidic residues predominate over residues Glu-346 to Glu-366. The span at Ala-446–Pro-459 shows a compositional bias: basic and acidic residues. The Peptidase A2 domain maps to Phe-863–Ile-939. Asp-868 acts as the Protease; shared with dimeric partner in catalysis. The G-patch domain occupies Pro-950–Asn-996. A Reverse transcriptase domain is found at Leu-1044 to Leu-1232. Mg(2+) contacts are provided by Asp-1109, Asp-1184, Asp-1185, Asp-1464, Glu-1493, Asp-1514, and Asp-1578. The RNase H type-1 domain maps to Ile-1455–Ile-1586. The segment at Asp-1589–Val-1630 adopts an Integrase-type zinc-finger fold. Residues His-1598, His-1602, Cys-1626, and Cys-1629 each contribute to the Zn(2+) site. One can recognise an Integrase catalytic domain in the interval Arg-1643–Thr-1804. Mg(2+) contacts are provided by Asp-1654, Asp-1711, and Glu-1747. Residues Ala-1809–Asn-1858 constitute a DNA-binding region (integrase-type). The tract at residues Gln-1859–Pro-1880 is disordered.

Homodimer. As to quaternary structure, interacts with the G-patch peptide. In terms of assembly, interacts with the reverse transcriptase/ribonuclease H. Homotrimer. Mg(2+) serves as cofactor. In terms of processing, myristoylated. Myristoylation of the matrix (MA) domain mediates the transport and binding of Gag polyproteins to the host plasma membrane and is required for the assembly of viral particles. Specific enzymatic cleavages in vivo yield mature proteins. Post-translationally, released by autocatalytic processing. The protease can undergo further autoprocessing to yield 2 shorter but enzymatically active forms of 12 kDa and 13 kDa.

It localises to the virion. The enzyme catalyses DNA(n) + a 2'-deoxyribonucleoside 5'-triphosphate = DNA(n+1) + diphosphate. The catalysed reaction is Endonucleolytic cleavage to 5'-phosphomonoester.. It carries out the reaction dUTP + H2O = dUMP + diphosphate + H(+). Functionally, matrix protein. Its function is as follows. Capsid protein. In terms of biological role, matrix protein p10: Matrix protein. Nucleocapsid protein p14: Nucleocapsid protein. Functionally, capsid protein p27: capsid protein. Its function is as follows. The aspartyl protease mediates proteolytic cleavages of Gag and Gag-Pol polyproteins during or shortly after the release of the virion from the plasma membrane. Cleavages take place as an ordered, step-wise cascade to yield mature proteins. This process is called maturation. Displays maximal activity during the budding process just prior to particle release from the cell. In terms of biological role, enhances the activity of the reverse transcriptase. May be part of the mature RT. RT is a multifunctional enzyme that converts the viral dimeric RNA genome into dsDNA in the cytoplasm, shortly after virus entry into the cell. This enzyme displays a DNA polymerase activity that can copy either DNA or RNA templates, and a ribonuclease H (RNase H) activity that cleaves the RNA strand of RNA-DNA heteroduplexes in a partially processive 3' to 5' endonucleasic mode. Conversion of viral genomic RNA into dsDNA requires many steps. A tRNA binds to the primer-binding site (PBS) situated at the 5' end of the viral RNA. RT uses the 3' end of the tRNA primer to perfom a short round of RNA-dependent minus-strand DNA synthesis. The reading proceeds through the U5 region and ends after the repeated (R) region which is present at both ends of viral RNA. The portion of the RNA-DNA heteroduplex is digested by the RNase H, resulting in a ssDNA product attached to the tRNA primer. This ssDNA/tRNA hybridizes with the identical R region situated at the 3' end of viral RNA. This template exchange, known as minus-strand DNA strong stop transfer, can be either intra- or intermolecular. RT uses the 3' end of this newly synthesized short ssDNA to perfom the RNA-dependent minus-strand DNA synthesis of the whole template. RNase H digests the RNA template except for a polypurine tract (PPT) situated at the 5' end of the genome. It is not clear if both polymerase and RNase H activities are simultaneous. RNase H probably can proceed both in a polymerase-dependent (RNA cut into small fragments by the same RT performing DNA synthesis) and a polymerase-independent mode (cleavage of remaining RNA fragments by free RTs). Secondly, RT performs DNA-directed plus-strand DNA synthesis using the PPT that has not been removed by RNase H as primers. PPT and tRNA primers are then removed by RNase H. The 3' and 5' ssDNA PBS regions hybridize to form a circular dsDNA intermediate. Strand displacement synthesis by RT to the PBS and PPT ends produces a blunt ended, linear dsDNA copy of the viral genome that includes long terminal repeats (LTRs) at both ends. Functionally, catalyzes viral DNA integration into the host chromosome, by performing a series of DNA cutting and joining reactions. This is Gag-Pro-Pol polyprotein (pol) from Mammalia (SMRV-H).